A 778-amino-acid chain; its full sequence is Zinc finger protein 749 (778 aa).

A KRAB domain is found at 8 to 101 (MVFEDVAIYF…ILKDILHLAE (94 aa)). The segment at 152 to 174 (FTCTQGGKDFTASSDLLQQQVLN) adopts a C2H2-type 1; degenerate zinc-finger fold. The segment at 196 to 218 (FNSSQGGKDFCHQHGLFEHQKTH) adopts a C2H2-type 2; degenerate zinc-finger fold. The segment at 224–246 (YEFSECGELFRYNSNLIKYQQNH) adopts a C2H2-type 3; degenerate zinc-finger fold. The C2H2-type 4; degenerate zinc-finger motif lies at 252–274 (YEGTEYGKTFIRKSNLVQHQKIH). 6 consecutive C2H2-type zinc fingers follow at residues 298 to 320 (YECT…QKTH), 326 to 348 (YECN…QKVH), 354 to 376 (YECS…QRVH), 382 to 404 (FECS…QRVH), 410 to 432 (YKCS…LKIH), and 438 to 460 (YECT…QKIH). Lys-466 bears the N6-acetyllysine mark. 2 C2H2-type zinc fingers span residues 483–505 (YTCS…QKIH) and 511–533 (YECT…EKIH). Lys-539 bears the N6-acetyllysine mark. The C2H2-type 13; degenerate zinc-finger motif lies at 556–578 (YVCSECGKAFLTQAHLDGHQKIQ). 3 consecutive C2H2-type zinc fingers follow at residues 584-606 (YECN…QRIH), 612-634 (YKCS…QKVH), and 640-662 (YECS…QRVH). Residues 668 to 690 (YECSNCGKFLRYRSTFIKHHKVC) form a C2H2-type 17; atypical zinc finger. The C2H2-type 18 zinc-finger motif lies at 696–718 (HECSKCRELFRTKSSLIIHQQSH). Residues 751–773 (YECGESSKVFKYNSSLIKHQIIH) form a C2H2-type 19; degenerate zinc finger. Glycyl lysine isopeptide (Lys-Gly) (interchain with G-Cter in SUMO2) cross-links involve residues Lys-761 and Lys-768.

Belongs to the krueppel C2H2-type zinc-finger protein family.

The protein localises to the nucleus. Its function is as follows. May be involved in transcriptional regulation. This Homo sapiens (Human) protein is Zinc finger protein 749 (ZNF749).